Reading from the N-terminus, the 178-residue chain is CDP-archaeol synthase (178 aa).

The next 5 helical transmembrane spans lie at 3–23 (LLLL…ANAV), 56–76 (FFGI…VILY), 91–111 (IILG…GSFI), 123–143 (APLL…YPLY), and 149–169 (LMVI…IIAY).

Belongs to the CDP-archaeol synthase family. It depends on Mg(2+) as a cofactor.

The protein localises to the cell membrane. The catalysed reaction is 2,3-bis-O-(geranylgeranyl)-sn-glycerol 1-phosphate + CTP + H(+) = CDP-2,3-bis-O-(geranylgeranyl)-sn-glycerol + diphosphate. The protein operates within membrane lipid metabolism; glycerophospholipid metabolism. Catalyzes the formation of CDP-2,3-bis-(O-geranylgeranyl)-sn-glycerol (CDP-archaeol) from 2,3-bis-(O-geranylgeranyl)-sn-glycerol 1-phosphate (DGGGP) and CTP. This reaction is the third ether-bond-formation step in the biosynthesis of archaeal membrane lipids. This chain is CDP-archaeol synthase, found in Methanococcus maripaludis (strain C7 / ATCC BAA-1331).